We begin with the raw amino-acid sequence, 715 residues long: Probable serine/threonine-protein kinase MARK-B (715 aa).

Residues 24–37 show a composition bias toward low complexity; it reads SCSSNSTTSSSSNS. The segment at 24–65 is disordered; that stretch reads SCSSNSTTSSSSNSPKQNKVSPGYRNKPQQQQHKKGHKMGNY. The Protein kinase domain maps to 65-320; sequence YLLGKTIGSG…LDEIKTHVWV (256 aa). ATP contacts are provided by residues 71–79 and Lys-94; that span reads IGSGTSSKV. The active-site Proton acceptor is Asp-187. Positions 335–344 are enriched in basic and acidic residues; that stretch reads KVSDRLEKEQ. 2 disordered regions span residues 335–399 and 446–530; these read KVSD…IPQN and CSAP…HHST. Over residues 345–368 the composition is skewed to low complexity; that stretch reads QQQTPQHQQTQQQLQPQSQLQQHS. A compositionally biased stretch (polar residues) spans 381–399; that stretch reads IGSNRPLNQSSPNLTIPQN. Composition is skewed to low complexity over residues 451-478 and 487-513; these read SPHS…LSVS and SSNP…INTS. A compositionally biased stretch (basic residues) spans 517–527; it reads QYHHHHHHQNH. A KA1 domain is found at 666–715; sequence LCPRNETINFEIEVCKVNGMDMYGIKFKRLSGDAWSYSSSCIKIVESLKL.

The protein belongs to the protein kinase superfamily. CAMK Ser/Thr protein kinase family. SNF1 subfamily.

The catalysed reaction is L-seryl-[protein] + ATP = O-phospho-L-seryl-[protein] + ADP + H(+). It carries out the reaction L-threonyl-[protein] + ATP = O-phospho-L-threonyl-[protein] + ADP + H(+). The protein is Probable serine/threonine-protein kinase MARK-B (mrkB) of Dictyostelium discoideum (Social amoeba).